The chain runs to 1104 residues: DNA polymerase delta catalytic subunit (1104 aa).

The tract at residues 1–60 (MKRSIVTGGGNNDKKFKAQPPPKNNYRGGGDDEEDDEFEEDDDEDEGDEFGEEEDEDDID) is disordered. Residues 31–60 (DDEEDDEFEEDDDEDEGDEFGEEEDEDDID) show a composition bias toward acidic residues. The Zn(2+) site is built by C1012, C1015, C1027, and C1030. The CysA-type zinc-finger motif lies at 1012-1030 (CMNCPKELTDTESTTCINC). [4Fe-4S] cluster contacts are provided by C1059, C1062, C1072, and C1077. The CysB motif motif lies at 1059–1077 (CQRCSGSLHQPVLCSNRDC).

The protein belongs to the DNA polymerase type-B family. In terms of assembly, heterotetramer composed of subunits of 125 kDa, 50 kDa, 66 kDa and 12 kDa. The 125 kDa subunit contains the polymerase active site and most likely the active site for the 3'-5' exonuclease activity. [4Fe-4S] cluster is required as a cofactor.

The protein localises to the nucleus. It carries out the reaction DNA(n) + a 2'-deoxyribonucleoside 5'-triphosphate = DNA(n+1) + diphosphate. In terms of biological role, possesses two enzymatic activities: DNA synthesis (polymerase) and an exonucleolytic activity that degrades single stranded DNA in the 3'- to 5'-direction. In Dictyostelium discoideum (Social amoeba), this protein is DNA polymerase delta catalytic subunit (pold1).